Consider the following 202-residue polypeptide: LexA repressor 2 (202 aa).

Positions 28–48 (LAEISEAFGFASRSVARKHIV) form a DNA-binding region, H-T-H motif. Residues S123 and K160 each act as for autocatalytic cleavage activity in the active site.

Belongs to the peptidase S24 family. As to quaternary structure, homodimer.

The enzyme catalyses Hydrolysis of Ala-|-Gly bond in repressor LexA.. Functionally, represses a number of genes involved in the response to DNA damage (SOS response), including recA and lexA. In the presence of single-stranded DNA, RecA interacts with LexA causing an autocatalytic cleavage which disrupts the DNA-binding part of LexA, leading to derepression of the SOS regulon and eventually DNA repair. This chain is LexA repressor 2, found in Pseudomonas syringae pv. tomato (strain ATCC BAA-871 / DC3000).